Here is a 570-residue protein sequence, read N- to C-terminus: MQELKGIGASAGIAIAKAYRLEEPDLTVEKKNISDSEAEVSRFDEAIARSKEELEKIKEHALKELGQDKADIFSAHLLVLSDPELLNPVKEKISTDSVNAEFALKETSSMFVTMFESMDNEYMKERAADIRDVTKRVTGHLLGVEIPNPSMISEEVIIVAEDLTPSDTAQLNREFVKGFTTDIGGRTSHSAIMARSLEIPAVVGTKAATGTIQNGVTVIVDGINGDVIIDPSAETVKEYEEKHNAYLAQKAEWAKLVNEPTVSKDGHHVELAANIGTPDDVKGVLENGGEAVGLYRTEFLYMGRDQLPTEDEQFDAYKTVLERMEGKSVVVRTLDIGGDKELPYLQLPKEMNPFLGYRAIRLCLEEQEIFRTQLRALLRASTYGNLKIMFPMIATVNEFKEAKAILLEEKEKLVKAGQAVSDDIEVGMMVEIPSTAVIADQFAKEVDFFSIGTNDLIQYTMAADRMNERVSYLYQPYNPAILRLITLVIEAAHKEGKWVGMCGEMAGDEIAIPILLGLGLDEFSMSATSILPARTQISKLSKQEAESFKEKILSMSTTEEVVAFVKETFK.

The Tele-phosphohistidine intermediate role is filled by His-189. Positions 296 and 332 each coordinate phosphoenolpyruvate. Glu-431 and Asp-455 together coordinate Mg(2+). Phosphoenolpyruvate contacts are provided by residues 454–455 (ND) and Arg-465. Residue Cys-502 is the Proton donor of the active site.

The protein belongs to the PEP-utilizing enzyme family. As to quaternary structure, homodimer. Interacts with FloT. Mg(2+) serves as cofactor.

The protein localises to the cytoplasm. It is found in the membrane raft. The catalysed reaction is L-histidyl-[protein] + phosphoenolpyruvate = N(pros)-phospho-L-histidyl-[protein] + pyruvate. In terms of biological role, general (non sugar-specific) component of the phosphoenolpyruvate-dependent sugar phosphotransferase system (sugar PTS). This major carbohydrate active-transport system catalyzes the phosphorylation of incoming sugar substrates concomitantly with their translocation across the cell membrane. Enzyme I transfers the phosphoryl group from phosphoenolpyruvate (PEP) to the phosphoryl carrier protein (HPr). The polypeptide is Phosphoenolpyruvate-protein phosphotransferase (ptsI) (Bacillus subtilis (strain 168)).